The following is a 246-amino-acid chain: uncharacterized protein (246 aa).

This is an uncharacterized protein from Dictyostelium discoideum (Social amoeba).